Consider the following 174-residue polypeptide: Transcription antitermination protein NusB (174 aa).

The protein belongs to the NusB family.

Functionally, involved in transcription antitermination. Required for transcription of ribosomal RNA (rRNA) genes. Binds specifically to the boxA antiterminator sequence of the ribosomal RNA (rrn) operons. The sequence is that of Transcription antitermination protein NusB from Rhodopseudomonas palustris (strain ATCC BAA-98 / CGA009).